A 127-amino-acid polypeptide reads, in one-letter code: Large ribosomal subunit protein bL19 (127 aa).

The protein belongs to the bacterial ribosomal protein bL19 family.

This protein is located at the 30S-50S ribosomal subunit interface and may play a role in the structure and function of the aminoacyl-tRNA binding site. The chain is Large ribosomal subunit protein bL19 from Trichodesmium erythraeum (strain IMS101).